Consider the following 442-residue polypeptide: Chromosomal replication initiator protein DnaA (442 aa).

The segment at 1–75 (MDAWPRCLER…GNGEVALAVG (75 aa)) is domain I, interacts with DnaA modulators. The interval 75-104 (GSRPRAPEPAPAPVAATIAPQAAPIAPFAG) is domain II. The tract at residues 105–322 (NLDSHYTFAN…GALNTLVARA (218 aa)) is domain III, AAA+ region. Glycine 150, glycine 152, lysine 153, and threonine 154 together coordinate ATP. A domain IV, binds dsDNA region spans residues 323–442 (NFTGRSITVE…WEKLIRKLSE (120 aa)).

This sequence belongs to the DnaA family. Oligomerizes as a right-handed, spiral filament on DNA at oriC.

The protein localises to the cytoplasm. Its function is as follows. Plays an essential role in the initiation and regulation of chromosomal replication. ATP-DnaA binds to the origin of replication (oriC) to initiate formation of the DNA replication initiation complex once per cell cycle. Binds the DnaA box (a 9 base pair repeat at the origin) and separates the double-stranded (ds)DNA. Forms a right-handed helical filament on oriC DNA; dsDNA binds to the exterior of the filament while single-stranded (ss)DNA is stabiized in the filament's interior. The ATP-DnaA-oriC complex binds and stabilizes one strand of the AT-rich DNA unwinding element (DUE), permitting loading of DNA polymerase. After initiation quickly degrades to an ADP-DnaA complex that is not apt for DNA replication. Binds acidic phospholipids. This chain is Chromosomal replication initiator protein DnaA, found in Xanthomonas oryzae pv. oryzae (strain PXO99A).